A 312-amino-acid polypeptide reads, in one-letter code: Malate dehydrogenase (312 aa).

Residues 7–13 and D34 contribute to the NAD(+) site; that span reads GAAGGIG. Residues R81 and R87 each contribute to the substrate site. NAD(+)-binding positions include N94 and 117 to 119; that span reads ITN. Substrate is bound by residues N119 and R153. Residue H177 is the Proton acceptor of the active site. M227 contributes to the NAD(+) binding site.

The protein belongs to the LDH/MDH superfamily. MDH type 1 family. As to quaternary structure, homodimer.

It catalyses the reaction (S)-malate + NAD(+) = oxaloacetate + NADH + H(+). In terms of biological role, catalyzes the reversible oxidation of malate to oxaloacetate. In Salmonella dublin (strain CT_02021853), this protein is Malate dehydrogenase.